We begin with the raw amino-acid sequence, 211 residues long: Large ribosomal subunit protein uL3 (211 aa).

Position 150 is an N5-methylglutamine (Q150).

Belongs to the universal ribosomal protein uL3 family. In terms of assembly, part of the 50S ribosomal subunit. Forms a cluster with proteins L14 and L19. Post-translationally, methylated by PrmB.

Its function is as follows. One of the primary rRNA binding proteins, it binds directly near the 3'-end of the 23S rRNA, where it nucleates assembly of the 50S subunit. The sequence is that of Large ribosomal subunit protein uL3 from Pseudomonas syringae pv. tomato (strain ATCC BAA-871 / DC3000).